The chain runs to 186 residues: UPF0398 protein BPUM_1952 (186 aa).

Belongs to the UPF0398 family.

This chain is UPF0398 protein BPUM_1952, found in Bacillus pumilus (strain SAFR-032).